Reading from the N-terminus, the 272-residue chain is MDRYAVFGNPIEHSKSPLIHTLFAKQTQQVIEYGRQQPDSNGFNDAINAFFTEGFIGANVTSPFKLDAFRFADELTPRARAAEAVNTLYKRQDGSILGDNTDGAGLVQDLQRLWGELNGKRLLLIGAGGATRGVILPLLTAKVQNIHIANRTASKAQQLADRFKKEGVITASGFNDLPEIQFDLIVNCTSSSLDGGLPEITPSIFINASYAYDMTYKAQATSFMVWAQECTPSIRTADGLGMLVGQAAESFYVWRKVRPKIEPIIEIVREML.

Shikimate-binding positions include 14-16 and Thr-61; that span reads SKS. The active-site Proton acceptor is Lys-65. The shikimate site is built by Asn-86 and Asp-102. NADP(+) is bound by residues 126–130, 150–155, and Met-214; these read GAGGA and NRTASK. Tyr-216 serves as a coordination point for shikimate. Residue Gly-239 coordinates NADP(+).

The protein belongs to the shikimate dehydrogenase family. Homodimer.

It catalyses the reaction shikimate + NADP(+) = 3-dehydroshikimate + NADPH + H(+). It participates in metabolic intermediate biosynthesis; chorismate biosynthesis; chorismate from D-erythrose 4-phosphate and phosphoenolpyruvate: step 4/7. Involved in the biosynthesis of the chorismate, which leads to the biosynthesis of aromatic amino acids. Catalyzes the reversible NADPH linked reduction of 3-dehydroshikimate (DHSA) to yield shikimate (SA). In Pseudoalteromonas atlantica (strain T6c / ATCC BAA-1087), this protein is Shikimate dehydrogenase (NADP(+)).